Consider the following 389-residue polypeptide: S-adenosylmethionine synthase (389 aa).

His17 lines the ATP pocket. Residue Asp19 participates in Mg(2+) binding. Position 45 (Glu45) interacts with K(+). L-methionine-binding residues include Glu58 and Gln101. Residues 101–111 (QSPDISQGVTE) are flexible loop. Residues 168–170 (DSK), 234–235 (RF), Asp243, 249–250 (RK), Ala266, and Lys270 each bind ATP. An L-methionine-binding site is contributed by Asp243. Lys274 lines the L-methionine pocket.

This sequence belongs to the AdoMet synthase family. In terms of assembly, homotetramer; dimer of dimers. It depends on Mg(2+) as a cofactor. K(+) serves as cofactor.

Its subcellular location is the cytoplasm. The enzyme catalyses L-methionine + ATP + H2O = S-adenosyl-L-methionine + phosphate + diphosphate. Its pathway is amino-acid biosynthesis; S-adenosyl-L-methionine biosynthesis; S-adenosyl-L-methionine from L-methionine: step 1/1. Its function is as follows. Catalyzes the formation of S-adenosylmethionine (AdoMet) from methionine and ATP. The overall synthetic reaction is composed of two sequential steps, AdoMet formation and the subsequent tripolyphosphate hydrolysis which occurs prior to release of AdoMet from the enzyme. The sequence is that of S-adenosylmethionine synthase from Geobacter sulfurreducens (strain ATCC 51573 / DSM 12127 / PCA).